The primary structure comprises 144 residues: Large ribosomal subunit protein uL15 (144 aa).

Residues 1–53 (MFLNTIKPGEGAKHAKRRVGRGIGSGLGKTAGRGHKGQKSRSGGFHKVGFEGG) are disordered. Residues 21 to 31 (RGIGSGLGKTA) show a composition bias toward gly residues.

The protein belongs to the universal ribosomal protein uL15 family. Part of the 50S ribosomal subunit.

Binds to the 23S rRNA. In Laribacter hongkongensis (strain HLHK9), this protein is Large ribosomal subunit protein uL15.